Consider the following 60-residue polypeptide: Large ribosomal subunit protein bL32 (60 aa).

Residues 1–16 (MAVPKRKTSPSKRGMR) are compositionally biased toward basic residues. A disordered region spans residues 1–60 (MAVPKRKTSPSKRGMRRSADALKAPTYVEDKNSGELRRPHHVDLKTGMYRGRQVLEPKEA). Residues 28-44 (VEDKNSGELRRPHHVDL) are compositionally biased toward basic and acidic residues.

Belongs to the bacterial ribosomal protein bL32 family.

In Chelativorans sp. (strain BNC1), this protein is Large ribosomal subunit protein bL32.